The chain runs to 283 residues: Eukaryotic translation initiation factor 3 subunit K (283 aa).

Residues 52-263 enclose the PCI domain; sequence YDLLANLAIL…EIKATVIREE (212 aa). Residues 114–135 form a disordered region; the sequence is EATTTDADNAGSLSGDDDDDEV.

The protein belongs to the eIF-3 subunit K family. As to quaternary structure, component of the eukaryotic translation initiation factor 3 (eIF-3) complex.

The protein localises to the cytoplasm. In terms of biological role, component of the eukaryotic translation initiation factor 3 (eIF-3) complex, which is involved in protein synthesis of a specialized repertoire of mRNAs and, together with other initiation factors, stimulates binding of mRNA and methionyl-tRNAi to the 40S ribosome. The eIF-3 complex specifically targets and initiates translation of a subset of mRNAs involved in cell proliferation. The chain is Eukaryotic translation initiation factor 3 subunit K from Mycosarcoma maydis (Corn smut fungus).